Consider the following 100-residue polypeptide: Large ribosomal subunit protein bL21 (100 aa).

This sequence belongs to the bacterial ribosomal protein bL21 family. Part of the 50S ribosomal subunit. Contacts protein L20.

This protein binds to 23S rRNA in the presence of protein L20. This Wolbachia sp. subsp. Drosophila simulans (strain wRi) protein is Large ribosomal subunit protein bL21.